A 538-amino-acid chain; its full sequence is NADH-quinone oxidoreductase subunit N (538 aa).

The next 14 helical transmembrane spans lie at 12–32 (IAYG…VSVL), 47–67 (LALA…LSGS), 81–101 (PTLY…VVMA), 144–164 (GITQ…MMLF), 170–190 (LLTM…MCAL), 205–225 (YFLL…FVYG), 248–268 (FLLL…GAVP), 294–314 (IAAF…ITTD), 317–337 (PVLW…AVTQ), 343–363 (MLAY…AAAN), 371–391 (LFYL…AGLV), 423–443 (APVL…IPLT), 472–492 (SAIA…ADPV), and 502–522 (GPAV…LGVA).

It belongs to the complex I subunit 2 family. NDH-1 is composed of 14 different subunits. Subunits NuoA, H, J, K, L, M, N constitute the membrane sector of the complex.

It localises to the cell membrane. The catalysed reaction is a quinone + NADH + 5 H(+)(in) = a quinol + NAD(+) + 4 H(+)(out). Functionally, NDH-1 shuttles electrons from NADH, via FMN and iron-sulfur (Fe-S) centers, to quinones in the respiratory chain. The immediate electron acceptor for the enzyme in this species is believed to be a menaquinone. Couples the redox reaction to proton translocation (for every two electrons transferred, four hydrogen ions are translocated across the cytoplasmic membrane), and thus conserves the redox energy in a proton gradient. The protein is NADH-quinone oxidoreductase subunit N of Mycobacteroides abscessus (strain ATCC 19977 / DSM 44196 / CCUG 20993 / CIP 104536 / JCM 13569 / NCTC 13031 / TMC 1543 / L948) (Mycobacterium abscessus).